Reading from the N-terminus, the 288-residue chain is RanBP2-type zinc finger protein At1g67325 (288 aa).

Residues 1–11 (MSQVDNRNSSA) show a composition bias toward polar residues. Disordered regions lie at residues 1 to 24 (MSQV…RRED), 52 to 77 (PADH…GAYL), 176 to 198 (MPRP…DNDW), 222 to 248 (PKPG…WKCD), and 265 to 288 (NCGA…ENDQ). A compositionally biased stretch (basic and acidic residues) spans 15 to 24 (ARTDGGRRED). 3 consecutive RanBP2-type zinc fingers follow at residues 22 to 53 (REDD…PRPA), 194 to 225 (RDND…PKPG), and 241 to 272 (PEGS…DKPG). Residues 181–197 (FYPDEKSQKRDSTRDND) are compositionally biased toward basic and acidic residues. Residues 223–241 (KPGSQQGGSSDKISKQNAP) show a composition bias toward polar residues. Position 278 is a phosphoserine (Ser-278).

This chain is RanBP2-type zinc finger protein At1g67325, found in Arabidopsis thaliana (Mouse-ear cress).